A 277-amino-acid polypeptide reads, in one-letter code: Diaminopimelate epimerase (277 aa).

The substrate site is built by asparagine 15, glutamine 48, and asparagine 66. Cysteine 75 acts as the Proton donor in catalysis. Substrate-binding positions include 76-77 (GN), asparagine 156, asparagine 189, and 207-208 (ER). Cysteine 216 acts as the Proton acceptor in catalysis. 217–218 (GS) lines the substrate pocket.

The protein belongs to the diaminopimelate epimerase family. Homodimer.

It is found in the cytoplasm. The catalysed reaction is (2S,6S)-2,6-diaminopimelate = meso-2,6-diaminopimelate. It functions in the pathway amino-acid biosynthesis; L-lysine biosynthesis via DAP pathway; DL-2,6-diaminopimelate from LL-2,6-diaminopimelate: step 1/1. Functionally, catalyzes the stereoinversion of LL-2,6-diaminopimelate (L,L-DAP) to meso-diaminopimelate (meso-DAP), a precursor of L-lysine and an essential component of the bacterial peptidoglycan. This is Diaminopimelate epimerase from Acidiphilium cryptum (strain JF-5).